Consider the following 231-residue polypeptide: ATP phosphoribosyltransferase (231 aa).

Belongs to the ATP phosphoribosyltransferase family. Short subfamily. As to quaternary structure, heteromultimer composed of HisG and HisZ subunits.

It is found in the cytoplasm. The catalysed reaction is 1-(5-phospho-beta-D-ribosyl)-ATP + diphosphate = 5-phospho-alpha-D-ribose 1-diphosphate + ATP. It participates in amino-acid biosynthesis; L-histidine biosynthesis; L-histidine from 5-phospho-alpha-D-ribose 1-diphosphate: step 1/9. Functionally, catalyzes the condensation of ATP and 5-phosphoribose 1-diphosphate to form N'-(5'-phosphoribosyl)-ATP (PR-ATP). Has a crucial role in the pathway because the rate of histidine biosynthesis seems to be controlled primarily by regulation of HisG enzymatic activity. The sequence is that of ATP phosphoribosyltransferase from Brucella melitensis biotype 2 (strain ATCC 23457).